The following is a 339-amino-acid chain: Ketol-acid reductoisomerase (NADP(+)) (339 aa).

A KARI N-terminal Rossmann domain is found at 1–182; sequence MRVYYDRDAD…GGGRAGIIET (182 aa). Residues 24-27, arginine 48, serine 51, serine 53, and 83-86 each bind NADP(+); these read YGSQ and DELQ. Histidine 108 is a catalytic residue. Residue glycine 134 coordinates NADP(+). One can recognise a KARI C-terminal knotted domain in the interval 183–328; sequence TFKEECETDL…ERLRAMMPWI (146 aa). Positions 191, 195, 227, and 231 each coordinate Mg(2+). Residue serine 252 participates in substrate binding.

It belongs to the ketol-acid reductoisomerase family. The cofactor is Mg(2+).

The catalysed reaction is (2R)-2,3-dihydroxy-3-methylbutanoate + NADP(+) = (2S)-2-acetolactate + NADPH + H(+). It carries out the reaction (2R,3R)-2,3-dihydroxy-3-methylpentanoate + NADP(+) = (S)-2-ethyl-2-hydroxy-3-oxobutanoate + NADPH + H(+). It functions in the pathway amino-acid biosynthesis; L-isoleucine biosynthesis; L-isoleucine from 2-oxobutanoate: step 2/4. Its pathway is amino-acid biosynthesis; L-valine biosynthesis; L-valine from pyruvate: step 2/4. Its function is as follows. Involved in the biosynthesis of branched-chain amino acids (BCAA). Catalyzes an alkyl-migration followed by a ketol-acid reduction of (S)-2-acetolactate (S2AL) to yield (R)-2,3-dihydroxy-isovalerate. In the isomerase reaction, S2AL is rearranged via a Mg-dependent methyl migration to produce 3-hydroxy-3-methyl-2-ketobutyrate (HMKB). In the reductase reaction, this 2-ketoacid undergoes a metal-dependent reduction by NADPH to yield (R)-2,3-dihydroxy-isovalerate. The polypeptide is Ketol-acid reductoisomerase (NADP(+)) (Methylobacterium nodulans (strain LMG 21967 / CNCM I-2342 / ORS 2060)).